The chain runs to 908 residues: Glutamate receptor ionotropic, kainate 2 (908 aa).

A signal peptide spans 1 to 31; sequence MKIISPVLSNLVFSRSIKVLLCLLWIGYSQG. The Extracellular segment spans residues 32-561; it reads TTHVLRFGGI…VFSFLNPLSP (530 aa). Residues N67, N73, N275, N378, N412, N423, and N430 are each glycosylated (N-linked (GlcNAc...) asparagine). A disulfide bridge connects residues C96 and C347. L-glutamate is bound by residues P516, A518, and R523. N546 carries an N-linked (GlcNAc...) asparagine glycan. A helical transmembrane segment spans residues 562–582; sequence DIWMYILLAYLGVSCVLFVIA. Residues 583 to 638 lie on the Cytoplasmic side of the membrane; the sequence is RFSPYEWYNPHPCNPDSDVVENNFTLLNSFWFGVGALMQQGSELMPKALSTRIVGG. The helical transmembrane segment at 639–659 threads the bilayer; that stretch reads IWWFFTLIIISSYTANLAAFL. Residues 660 to 819 are Extracellular-facing; that stretch reads TVERMESPID…KEASALGVQN (160 aa). Residues A689, T690, and E738 each coordinate L-glutamate. C750 and C804 are joined by a disulfide. N751 is a glycosylation site (N-linked (GlcNAc...) asparagine). The chain crosses the membrane as a helical span at residues 820 to 840; that stretch reads IGGIFIVLAAGLVLSVFVAVG. The Cytoplasmic segment spans residues 841 to 908; the sequence is EFLYKSKKNA…RRLPGKETMA (68 aa). Phosphoserine; by PKC occurs at positions 846 and 868. K886 participates in a covalent cross-link: Glycyl lysine isopeptide (Lys-Gly) (interchain with G-Cter in SUMO1).

It belongs to the glutamate-gated ion channel (TC 1.A.10.1) family. GRIK2 subfamily. As to quaternary structure, homotetramer and heterotetramer with GRIK5. Tetramers may be formed by the dimerization of dimers. Assembles into a kainate-gated homomeric channel that does not bind AMPA. Can form functional heteromeric receptors with GRIK3. Forms a heteromeric complex with GRIK4 and GRIK5. Interacts with DLG4. Interacts (via C-terminus) with KLHL17 (via kelch repeats); the interaction targets GRIK2 for degradation via ubiquitin-proteasome pathway. Interacts with NETO2. In terms of processing, sumoylation mediates kainate receptor-mediated endocytosis and regulates synaptic transmission. Sumoylation is enhanced by PIAS3 and desumoylated by SENP1. Post-translationally, ubiquitinated. Ubiquitination regulates the GRIK2 levels at the synapse by leading kainate receptor degradation through proteasome. Phosphorylated by PKC at Ser-868 upon agonist activation, this directly enhance sumoylation. In terms of tissue distribution, expressed in the hippocampal mossy fiber synapses (at protein level). Most abundant in the cerebellum and the hypothalamus. Expressed in a proportion of dorsal root ganglion (DRG) neurons (13.6%); predominantly small diameter DRG neurons (75%) with the remainder expressed in medium diameter DRG neurons.

Its subcellular location is the cell membrane. It is found in the postsynaptic cell membrane. The catalysed reaction is Ca(2+)(in) = Ca(2+)(out). It catalyses the reaction Na(+)(in) = Na(+)(out). Its activity is regulated as follows. Cold receptor activity activated by temperatures between 10-19 degrees Celsius. In terms of biological role, ionotropic glutamate receptor that functions as a cation-permeable ligand-gated ion channel, gated by L-glutamate and the glutamatergic agonist kainic acid. L-glutamate acts as an excitatory neurotransmitter at many synapses in the central nervous system. Binding of the excitatory neurotransmitter L-glutamate induces a conformation change, leading to the opening of the cation channel, and thereby converts the chemical signal to an electrical impulse. The receptor then desensitizes rapidly and enters a transient inactive state, characterized by the presence of bound agonist. Modulates cell surface expression of NETO2. In association with GRIK3, involved in presynaptic facilitation of glutamate release at hippocampal mossy fiber synapses. Functionally, independent of its ionotropic glutamate receptor activity, acts as a thermoreceptor conferring sensitivity to cold temperatures. Functions in dorsal root ganglion neurons. Ionotropic glutamate receptor that functions as a cation-permeable ligand-gated ion channel, gated by L-glutamate and the glutamatergic agonist kainic acid. This is Glutamate receptor ionotropic, kainate 2 (Grik2) from Mus musculus (Mouse).